A 294-amino-acid polypeptide reads, in one-letter code: Elongation factor Ts (294 aa).

Residues 79–82 (TDFV) are involved in Mg(2+) ion dislocation from EF-Tu.

It belongs to the EF-Ts family.

Its subcellular location is the cytoplasm. Its function is as follows. Associates with the EF-Tu.GDP complex and induces the exchange of GDP to GTP. It remains bound to the aminoacyl-tRNA.EF-Tu.GTP complex up to the GTP hydrolysis stage on the ribosome. The polypeptide is Elongation factor Ts (Geobacillus sp. (strain WCH70)).